The primary structure comprises 348 residues: Rhodopsin (348 aa).

At M1 the chain carries N-acetylmethionine. The Extracellular segment spans residues 1 to 36; it reads MNGTEGPNFYVPFSNKTGVVRSPFEFPQYYLAEPWQ. 2 N-linked (GlcNAc...) asparagine glycosylation sites follow: N2 and N15. A helical membrane pass occupies residues 37–61; it reads FSMLAAYMFLLIVLGFPINFLTLYV. At 62–73 the chain is on the cytoplasmic side; sequence TVQHKKLRTPLN. A helical membrane pass occupies residues 74-96; it reads YILLNLAVADLFMVFGGFTTTLY. Over 97-110 the chain is Extracellular; that stretch reads TSLHGYFVFGPTGC. C110 and C187 are oxidised to a cystine. The chain crosses the membrane as a helical span at residues 111 to 133; the sequence is NLEGFFATLGGEIALWSLVVLAI. Residues 134-136 carry the 'Ionic lock' involved in activated form stabilization motif; sequence ERY. The Cytoplasmic portion of the chain corresponds to 134-152; it reads ERYVVVCKPMSNFRFGENH. Residues 153–173 traverse the membrane as a helical segment; it reads AIMGVGFTWVMALACAAPPLV. Residues 174 to 202 are Extracellular-facing; it reads GWSRYIPEGMQCSCGIDYYTLKPEVNNES. E201 is a Zn(2+) binding site. The chain crosses the membrane as a helical span at residues 203 to 224; that stretch reads FVIYMFVVHFTIPMIVIFFCYG. The Cytoplasmic segment spans residues 225–252; it reads QLVFTVKEAAAQQQESATTQKAEKEVTR. The helical transmembrane segment at 253–274 threads the bilayer; the sequence is MVIIMVIAFLICWVPYASVAFY. At 275-286 the chain is on the extracellular side; that stretch reads IFTHQGSNFGPI. Q279 is a Zn(2+) binding site. A helical membrane pass occupies residues 287–308; the sequence is FMTLPAFFAKAASIYNPVIYIM. K296 carries the post-translational modification N6-(retinylidene)lysine. At 309-348 the chain is on the cytoplasmic side; sequence MNKQFRTCMITTLCCGKNPLGDDEVSASASKTETSQVAPA. Residues C322 and C323 are each lipidated (S-palmitoyl cysteine). The interval 330-348 is interaction with SAG; the sequence is DDEVSASASKTETSQVAPA. 2 positions are modified to phosphoserine: S334 and S338. T340 and T342 each carry phosphothreonine. Position 343 is a phosphoserine (S343).

The protein belongs to the G-protein coupled receptor 1 family. Opsin subfamily. As to quaternary structure, homodimer. May form a complex composed of RHO, GRK1 and RCVRN in a Ca(2+)-dependent manner; RCVRN prevents the interaction between GRK1 and RHO. Interacts with GRK1. Interacts (phosphorylated form) with SAG. Interacts with GNAT1. Interacts with GNAT3. SAG and G-proteins compete for a common binding site. Interacts with PRCD; the interaction promotes PRCD stability. Forms a complex with ASAP1 and ARF4. Forms a complex with ASAP1, RAB11A, Rabin8/RAB3IP, ARF4 and RAB11FIP3; the complex regulates Golgi-to-cilia rhodopsin/RHO transport in photoreceptors. Phosphorylated on some or all of the serine and threonine residues present in the C-terminal region. Post-translationally, contains one covalently linked retinal chromophore. Upon light absorption, the covalently bound 11-cis-retinal is converted to all-trans-retinal. After hydrolysis of the Schiff base and release of the covalently bound all-trans-retinal, active rhodopsin is regenerated by binding of a fresh molecule of 11-cis-retinal.

It is found in the membrane. Its subcellular location is the cell projection. The protein localises to the cilium. It localises to the photoreceptor outer segment. Its function is as follows. Photoreceptor required for image-forming vision at low light intensity. Required for photoreceptor cell viability after birth. Light-induced isomerization of 11-cis to all-trans retinal triggers a conformational change that activates signaling via G-proteins. Subsequent receptor phosphorylation mediates displacement of the bound G-protein alpha subunit by the arrestin SAG and terminates signaling. The chain is Rhodopsin (RHO) from Phoca vitulina (Harbor seal).